A 284-amino-acid polypeptide reads, in one-letter code: MGKIMEWAARSDHLGGIPRNTVIMAVSAFAKAVANLCNKSSVHNADTLMNLVQSRPPGVPLITVSNHMSTLDDPVMWGAFKGLLSLDPELARWVLAAEDICFRNPIFSYIFRTGKCIPITRGGGIYQENMNEALQRLKDGSWLHTFPEGKVFQDDVPIRRLKWGTASLIARSPVTPIVLPIIHRGFEEMMPENYNNGRRPLVPLPNKHLKVVVGEPIEFDVPMMVETAVLDSRHVTPPLQEVKWPVLTSAGQVLDETAQRHLYIALSEKIQSSLETLRLLAKRL.

Residues 21 to 37 (TVIMAVSAFAKAVANLC) form a helical membrane-spanning segment. Residues 67-72 (HMSTLD) carry the HXXXXD motif motif. The hydrophilic stretch occupies residues 122 to 163 (GGGIYQENMNEALQRLKDGSWLHTFPEGKVFQDDVPIRRLKW).

This sequence belongs to the taffazin family. As to expression, essentially present in young tissues. Expressed in roots, cotyledons, leaves, and shoot and root apical meristems.

Its subcellular location is the cell membrane. Acyltransferase that catalyzes the N-acylation of phosphatidylethanolamine to form N-acylphosphatidylethanolamine (N-acyl-PE) (e.g. NAPEs containing C16:0, C16:1, C18:0, and C18:1). Also mediates the formation of acylphosphatidylglycerol (acyl-PG) from lysoglycerophospholipid by O-acylation. Uses acyl-CoA as acyl donors. Acylates 1-acyllysophosphatidylethanolamine (1-acyllyso-PE) and 1-acyllysophosphatidylglycerol (1-acyllyso-PG) at the sn-2-position. The chain is N-acylphosphatidylethanolamine synthase from Arabidopsis thaliana (Mouse-ear cress).